The following is a 372-amino-acid chain: UDP-N-acetylglucosamine--N-acetylmuramyl-(pentapeptide) pyrophosphoryl-undecaprenol N-acetylglucosamine transferase (372 aa).

UDP-N-acetyl-alpha-D-glucosamine is bound by residues 14–16 (TGG), N128, R169, S201, I257, and Q302.

It belongs to the glycosyltransferase 28 family. MurG subfamily.

The protein resides in the cell inner membrane. The catalysed reaction is di-trans,octa-cis-undecaprenyl diphospho-N-acetyl-alpha-D-muramoyl-L-alanyl-D-glutamyl-meso-2,6-diaminopimeloyl-D-alanyl-D-alanine + UDP-N-acetyl-alpha-D-glucosamine = di-trans,octa-cis-undecaprenyl diphospho-[N-acetyl-alpha-D-glucosaminyl-(1-&gt;4)]-N-acetyl-alpha-D-muramoyl-L-alanyl-D-glutamyl-meso-2,6-diaminopimeloyl-D-alanyl-D-alanine + UDP + H(+). Its pathway is cell wall biogenesis; peptidoglycan biosynthesis. Functionally, cell wall formation. Catalyzes the transfer of a GlcNAc subunit on undecaprenyl-pyrophosphoryl-MurNAc-pentapeptide (lipid intermediate I) to form undecaprenyl-pyrophosphoryl-MurNAc-(pentapeptide)GlcNAc (lipid intermediate II). This chain is UDP-N-acetylglucosamine--N-acetylmuramyl-(pentapeptide) pyrophosphoryl-undecaprenol N-acetylglucosamine transferase, found in Bacteroides thetaiotaomicron (strain ATCC 29148 / DSM 2079 / JCM 5827 / CCUG 10774 / NCTC 10582 / VPI-5482 / E50).